The following is a 388-amino-acid chain: tRNA (guanine(26)-N(2))-dimethyltransferase (388 aa).

The Trm1 methyltransferase domain occupies 4-383; it reads RTIVEGTTKI…APIAEIKKII (380 aa). 4 residues coordinate S-adenosyl-L-methionine: arginine 41, arginine 78, aspartate 94, and alanine 123. Zn(2+) is bound by residues cysteine 251, cysteine 254, cysteine 271, and cysteine 274.

Belongs to the class I-like SAM-binding methyltransferase superfamily. Trm1 family.

It carries out the reaction guanosine(26) in tRNA + 2 S-adenosyl-L-methionine = N(2)-dimethylguanosine(26) in tRNA + 2 S-adenosyl-L-homocysteine + 2 H(+). Its function is as follows. Dimethylates a single guanine residue at position 26 of a number of tRNAs using S-adenosyl-L-methionine as donor of the methyl groups. The protein is tRNA (guanine(26)-N(2))-dimethyltransferase of Methanosarcina acetivorans (strain ATCC 35395 / DSM 2834 / JCM 12185 / C2A).